A 96-amino-acid chain; its full sequence is Dynein light chain roadblock-type 1 (96 aa).

Position 2 is an N-acetylalanine (Ala2).

This sequence belongs to the GAMAD family. Homodimer. The cytoplasmic dynein 1 complex consists of two catalytic heavy chains (HCs) and a number of non-catalytic subunits presented by intermediate chains (ICs), light intermediate chains (LICs) and light chains (LCs); the composition seems to vary in respect to the IC, LIC and LC composition. The heavy chain homodimer serves as a scaffold for the probable homodimeric assembly of the respective non-catalytic subunits. The ICs and LICs bind directly to the HC dimer and the LCs assemble on the IC dimer. Interacts with DYNLRB2. Interacts with DYNC1I1 and DYNC1I2. Interacts with RAB6A isoform 1 (GTP-bound); the interaction is direct. Interacts with RAB6A isoform 2 (GDP-bound); the interaction is direct. Interacts with RAB6B (GDP-bound).

It is found in the cytoplasm. The protein resides in the cytoskeleton. Acts as one of several non-catalytic accessory components of the cytoplasmic dynein 1 complex that are thought to be involved in linking dynein to cargos and to adapter proteins that regulate dynein function. Cytoplasmic dynein 1 acts as a motor for the intracellular retrograde motility of vesicles and organelles along microtubules. The sequence is that of Dynein light chain roadblock-type 1 (Dynlrb1) from Mus musculus (Mouse).